The primary structure comprises 349 residues: Trans-enoyl reductase phmE (349 aa).

55-58 is a binding site for NADP(+); it reads CDWK. 143 to 150 contributes to the substrate binding site; it reads TGIGTMGL. NADP(+) is bound by residues 182–185, Tyr-200, and 247–248; these read SPKN and LE. 267–271 contributes to the substrate binding site; sequence GMAIL. 336–337 is a binding site for NADP(+); the sequence is VS.

Belongs to the zinc-containing alcohol dehydrogenase family. Monomer.

It functions in the pathway mycotoxin biosynthesis. In terms of biological role, trans-enoyl reductase; part of the gene cluster that mediates the biosynthesis of the mycotoxins phomacins, leucine-derived cytochalasans with potent actin polymerization-inhibitory activities and monocot-specific antigerminative activities. The first step in the pathway is catalyzed by the hybrid PKS-NRPS phmA, assisted by the enoyl reductase phmE, that are responsible for fusion of the leucine precursor and the polyketide backbone to produce a 2-pyrrolidone intermediate. The polyketide synthase module (PKS) of phmA is responsible for the synthesis of the polyketide backbone and the downstream nonribosomal peptide synthetase (NRPS) amidates the carboxyl end of the polyketide with the leucine precursor. Because phmA lacks a designated enoylreductase (ER) domain, the required activity is provided the enoyl reductase phmE. Reduction by the hydrolyase phmG, followed by dehydration and intra-molecular Diels-Alder cyclization by the Diels-Alderase phmD then yield the required isoindolone-fused macrocycle. A number of oxidative steps catalyzed by the tailoring cytochrome P450 monooxygenase phmB, the FAD-linked oxidoreductase phmC and the short-chain dehydrogenase/reductase phmF, are further required to afford the final products, phomacin D and phomacin E. In Phaeosphaeria nodorum (strain SN15 / ATCC MYA-4574 / FGSC 10173) (Glume blotch fungus), this protein is Trans-enoyl reductase phmE.